We begin with the raw amino-acid sequence, 261 residues long: Cytochrome c oxidase subunit 3 (261 aa).

At 1-15 (MTHQTHAYHMVNPSP) the chain is on the mitochondrial matrix side. A helical transmembrane segment spans residues 16–34 (WPLTGALSALLMTSGLIMW). Residues 35 to 40 (FHFNST) are Mitochondrial intermembrane-facing. The helical transmembrane segment at 41-66 (ALLTLGLTTNMLTMYQWWRDVIREST) threads the bilayer. Residues 67 to 72 (FQGHHT) lie on the Mitochondrial matrix side of the membrane. A helical membrane pass occupies residues 73-105 (PAVQKGLRYGMILFIISEVLFFTGFFWAFYHSS). Over 106 to 128 (LAPTPELGGCWPPTGIHPLNPLE) the chain is Mitochondrial intermembrane. A helical transmembrane segment spans residues 129–152 (VPLLNTSVLLASGVSITWAHHSLM). Residues 153 to 155 (EGN) lie on the Mitochondrial matrix side of the membrane. A helical transmembrane segment spans residues 156–183 (RYHMLQALFITIALGVYFTLLQASEYYE). At 184-190 (APFTISD) the chain is on the mitochondrial intermembrane side. A helical transmembrane segment spans residues 191–223 (GVYGSTFFVATGFHGLHVIIGSTFLIVCFFRQL). Topologically, residues 224–232 (KFHFTSSHH) are mitochondrial matrix. The helical transmembrane segment at 233–256 (FGFEAAAWYWHFVDVVWLFLYMSI) threads the bilayer. The Mitochondrial intermembrane segment spans residues 257 to 261 (YWWGS).

The protein belongs to the cytochrome c oxidase subunit 3 family. As to quaternary structure, component of the cytochrome c oxidase (complex IV, CIV), a multisubunit enzyme composed of 14 subunits. The complex is composed of a catalytic core of 3 subunits MT-CO1, MT-CO2 and MT-CO3, encoded in the mitochondrial DNA, and 11 supernumerary subunits COX4I, COX5A, COX5B, COX6A, COX6B, COX6C, COX7A, COX7B, COX7C, COX8 and NDUFA4, which are encoded in the nuclear genome. The complex exists as a monomer or a dimer and forms supercomplexes (SCs) in the inner mitochondrial membrane with NADH-ubiquinone oxidoreductase (complex I, CI) and ubiquinol-cytochrome c oxidoreductase (cytochrome b-c1 complex, complex III, CIII), resulting in different assemblies (supercomplex SCI(1)III(2)IV(1) and megacomplex MCI(2)III(2)IV(2)).

The protein resides in the mitochondrion inner membrane. It carries out the reaction 4 Fe(II)-[cytochrome c] + O2 + 8 H(+)(in) = 4 Fe(III)-[cytochrome c] + 2 H2O + 4 H(+)(out). Its function is as follows. Component of the cytochrome c oxidase, the last enzyme in the mitochondrial electron transport chain which drives oxidative phosphorylation. The respiratory chain contains 3 multisubunit complexes succinate dehydrogenase (complex II, CII), ubiquinol-cytochrome c oxidoreductase (cytochrome b-c1 complex, complex III, CIII) and cytochrome c oxidase (complex IV, CIV), that cooperate to transfer electrons derived from NADH and succinate to molecular oxygen, creating an electrochemical gradient over the inner membrane that drives transmembrane transport and the ATP synthase. Cytochrome c oxidase is the component of the respiratory chain that catalyzes the reduction of oxygen to water. Electrons originating from reduced cytochrome c in the intermembrane space (IMS) are transferred via the dinuclear copper A center (CU(A)) of subunit 2 and heme A of subunit 1 to the active site in subunit 1, a binuclear center (BNC) formed by heme A3 and copper B (CU(B)). The BNC reduces molecular oxygen to 2 water molecules using 4 electrons from cytochrome c in the IMS and 4 protons from the mitochondrial matrix. This Ovis aries (Sheep) protein is Cytochrome c oxidase subunit 3 (MT-CO3).